Consider the following 345-residue polypeptide: Holliday junction branch migration complex subunit RuvB (345 aa).

Positions 1-186 (MSTDPDEREV…FGFTAHMDFY (186 aa)) are large ATPase domain (RuvB-L). ATP is bound by residues L25, R26, G67, K70, T71, S72, 133–135 (EDF), R176, Y186, and R223. T71 is a binding site for Mg(2+). The small ATPAse domain (RuvB-S) stretch occupies residues 187–257 (EPAELERVLV…VAKAALAVYD (71 aa)). Positions 260 to 345 (ELGLDRLDRA…AGANQPGLFE (86 aa)) are head domain (RuvB-H). Positions 315 and 320 each coordinate DNA.

The protein belongs to the RuvB family. Homohexamer. Forms an RuvA(8)-RuvB(12)-Holliday junction (HJ) complex. HJ DNA is sandwiched between 2 RuvA tetramers; dsDNA enters through RuvA and exits via RuvB. An RuvB hexamer assembles on each DNA strand where it exits the tetramer. Each RuvB hexamer is contacted by two RuvA subunits (via domain III) on 2 adjacent RuvB subunits; this complex drives branch migration. In the full resolvosome a probable DNA-RuvA(4)-RuvB(12)-RuvC(2) complex forms which resolves the HJ.

The protein localises to the cytoplasm. The catalysed reaction is ATP + H2O = ADP + phosphate + H(+). The RuvA-RuvB-RuvC complex processes Holliday junction (HJ) DNA during genetic recombination and DNA repair, while the RuvA-RuvB complex plays an important role in the rescue of blocked DNA replication forks via replication fork reversal (RFR). RuvA specifically binds to HJ cruciform DNA, conferring on it an open structure. The RuvB hexamer acts as an ATP-dependent pump, pulling dsDNA into and through the RuvAB complex. RuvB forms 2 homohexamers on either side of HJ DNA bound by 1 or 2 RuvA tetramers; 4 subunits per hexamer contact DNA at a time. Coordinated motions by a converter formed by DNA-disengaged RuvB subunits stimulates ATP hydrolysis and nucleotide exchange. Immobilization of the converter enables RuvB to convert the ATP-contained energy into a lever motion, pulling 2 nucleotides of DNA out of the RuvA tetramer per ATP hydrolyzed, thus driving DNA branch migration. The RuvB motors rotate together with the DNA substrate, which together with the progressing nucleotide cycle form the mechanistic basis for DNA recombination by continuous HJ branch migration. Branch migration allows RuvC to scan DNA until it finds its consensus sequence, where it cleaves and resolves cruciform DNA. The polypeptide is Holliday junction branch migration complex subunit RuvB (Mycobacterium ulcerans (strain Agy99)).